The chain runs to 242 residues: Small ribosomal subunit protein uS2 (242 aa).

This sequence belongs to the universal ribosomal protein uS2 family.

This Shewanella amazonensis (strain ATCC BAA-1098 / SB2B) protein is Small ribosomal subunit protein uS2.